Here is a 164-residue protein sequence, read N- to C-terminus: MNPRRKSRLYLAVVVLIGIGLTTTLVLYALRSNIDLFYTPGEILQGKGERHEKPEIGQRLRIGGMVMPGSVKRDDKTLEMSFKVYDARGAVTVTYTGILPDLFREGQGVVAQGVFAEGNTINAKEVLAKHDEKYTPPEVKEAMKENHTRPAEAYNSTAAQGNAS.

Residues 1–8 (MNPRRKSR) lie on the Cytoplasmic side of the membrane. Residues 9–29 (LYLAVVVLIGIGLTTTLVLYA) form a helical; Signal-anchor for type II membrane protein membrane-spanning segment. The Periplasmic segment spans residues 30–164 (LRSNIDLFYT…NSTAAQGNAS (135 aa)). 2 residues coordinate heme: histidine 130 and tyrosine 134. The segment covering 131–150 (DEKYTPPEVKEAMKENHTRP) has biased composition (basic and acidic residues). Residues 131 to 164 (DEKYTPPEVKEAMKENHTRPAEAYNSTAAQGNAS) form a disordered region. A compositionally biased stretch (polar residues) spans 154 to 164 (YNSTAAQGNAS).

It belongs to the CcmE/CycJ family.

It is found in the cell inner membrane. In terms of biological role, heme chaperone required for the biogenesis of c-type cytochromes. Transiently binds heme delivered by CcmC and transfers the heme to apo-cytochromes in a process facilitated by CcmF and CcmH. The sequence is that of Cytochrome c-type biogenesis protein CcmE from Yersinia enterocolitica serotype O:8 / biotype 1B (strain NCTC 13174 / 8081).